The chain runs to 218 residues: MSDNDELQQIAHLRREYTKGGLRRRDLPADPLTLFERWLSQACEAKLADPTAMVVATVDEHAQPYQRIVLLKHYDEKGMVFYTNLGSRKAHQIENNPRVSLLFPWHTLERQVMVIGKAERLSTLEVMKYFHSRPRDSQIGAWVSKQSSRISARGILESKFLELKQKFQQGEVPLPSFWGGFRVSLEQIEFWQGGEHRLHDRFLYQRENDAWKIDRLAP.

Substrate is bound by residues 14–17 (RREY) and Lys72. FMN contacts are provided by residues 67–72 (RIVLLK), 82–83 (YT), Arg88, Lys89, and Gln111. Substrate contacts are provided by Tyr129, Arg133, and Ser137. FMN is bound by residues 146–147 (QS) and Trp191. Substrate is bound at residue 197 to 199 (RLH). Arg201 lines the FMN pocket.

The protein belongs to the pyridoxamine 5'-phosphate oxidase family. In terms of assembly, homodimer. FMN serves as cofactor.

The catalysed reaction is pyridoxamine 5'-phosphate + O2 + H2O = pyridoxal 5'-phosphate + H2O2 + NH4(+). It catalyses the reaction pyridoxine 5'-phosphate + O2 = pyridoxal 5'-phosphate + H2O2. The protein operates within cofactor metabolism; pyridoxal 5'-phosphate salvage; pyridoxal 5'-phosphate from pyridoxamine 5'-phosphate: step 1/1. It functions in the pathway cofactor metabolism; pyridoxal 5'-phosphate salvage; pyridoxal 5'-phosphate from pyridoxine 5'-phosphate: step 1/1. Its function is as follows. Catalyzes the oxidation of either pyridoxine 5'-phosphate (PNP) or pyridoxamine 5'-phosphate (PMP) into pyridoxal 5'-phosphate (PLP). The chain is Pyridoxine/pyridoxamine 5'-phosphate oxidase from Escherichia coli (strain 55989 / EAEC).